The sequence spans 877 residues: Mediator of RNA polymerase II transcription subunit 16 (877 aa).

WD repeat units follow at residues 21–71, 72–119, 120–165, 166–203, 204–257, 258–334, 335–415, 416–460, and 461–495; these read WEKW…EHPW, DLHS…NSWE, SSVG…VKFS, PSLTLFGGKPMEGWIAVTVSGLVTVSLLKPSGQVLTST, ESLC…RIDT, EILP…DKQP, TILK…RPVD, EPAM…LSPS, and MGHPLEVGLALRHLLFLLEYCMVTGYDWWDILLHV. A disordered region spans residues 848 to 877; it reads PAFVQLGPQSTHHSPRTPRSLDHLHPEDRP. A compositionally biased stretch (basic and acidic residues) spans 866 to 877; the sequence is RSLDHLHPEDRP.

The protein belongs to the Mediator complex subunit 16 family. In terms of assembly, component of the Mediator complex, which is composed of MED1, MED4, MED6, MED7, MED8, MED9, MED10, MED11, MED12, MED13, MED13L, MED14, MED15, MED16, MED17, MED18, MED19, MED20, MED21, MED22, MED23, MED24, MED25, MED26, MED27, MED29, MED30, MED31, CCNC, CDK8 and CDC2L6/CDK11. The MED12, MED13, CCNC and CDK8 subunits form a distinct module termed the CDK8 module. Mediator containing the CDK8 module is less active than Mediator lacking this module in supporting transcriptional activation. Individual preparations of the Mediator complex lacking one or more distinct subunits have been variously termed ARC, CRSP, DRIP, PC2, SMCC and TRAP.

It is found in the nucleus. Functionally, component of the Mediator complex, a coactivator involved in the regulated transcription of nearly all RNA polymerase II-dependent genes. Mediator functions as a bridge to convey information from gene-specific regulatory proteins to the basal RNA polymerase II transcription machinery. Mediator is recruited to promoters by direct interactions with regulatory proteins and serves as a scaffold for the assembly of a functional preinitiation complex with RNA polymerase II and the general transcription factors. The sequence is that of Mediator of RNA polymerase II transcription subunit 16 (MED16) from Homo sapiens (Human).